The sequence spans 176 residues: MNLWKDIEPGPSVPEVVYAVVEIPKGSRNKYEYHKDLQAFALDRVLYSAVFYPAEYGIIPRTLYDDGDPMDILVLMDEPTFPGCIIESRPIGLLRMIDGGDQDDKILAVPVADPHFADVKDISDIPEHNLKEIANFFETYKKLEGKKTETLGWEGAEKAFEAVNHSIELYRKKYME.

Positions 30, 44, and 56 each coordinate substrate. The Mg(2+) site is built by aspartate 66, aspartate 71, and aspartate 103. Position 140 (tyrosine 140) interacts with substrate.

Belongs to the PPase family. Homohexamer. The cofactor is Mg(2+).

The protein localises to the cytoplasm. The enzyme catalyses diphosphate + H2O = 2 phosphate + H(+). In terms of biological role, catalyzes the hydrolysis of inorganic pyrophosphate (PPi) forming two phosphate ions. This chain is Inorganic pyrophosphatase, found in Methanothermobacter thermautotrophicus (strain ATCC 29096 / DSM 1053 / JCM 10044 / NBRC 100330 / Delta H) (Methanobacterium thermoautotrophicum).